A 483-amino-acid chain; its full sequence is Cyclic AMP-dependent transcription factor ATF-7 (483 aa).

The interval 1–285 (MGDDRPFVCN…GMVVGTASTM (285 aa)) is transactivation domain. Residues 7-31 (FVCNAPGCGQRFTNEDHLAVHKHKH) form a C2H2-type zinc finger. T51 carries the post-translational modification Phosphothreonine; by MAPK11. T53 and T101 each carry phosphothreonine. K107 participates in a covalent cross-link: Glycyl lysine isopeptide (Lys-Gly) (interchain with G-Cter in SUMO1). Disordered regions lie at residues 110–148 (EPVE…TPTP) and 299–345 (HPDA…NRAA). Composition is skewed to low complexity over residues 114-126 (VDSS…ASSP) and 307-320 (QPQV…PSTG). Residues 325 to 483 (RTVDEDPDER…MTPQSQSAGR (159 aa)) are essential for binding adenovirus 2 E1A. A compositionally biased stretch (basic and acidic residues) spans 326 to 343 (TVDEDPDERRQRFLERNR). Positions 332 to 395 (DERRQRFLER…AQLKQLLLAH (64 aa)) constitute a bZIP domain. The interval 334 to 354 (RRQRFLERNRAAASRCRQKRK) is basic motif. The tract at residues 360 to 388 (LEKKAEELTSQNIQLSNEVTLLRNEVAQL) is leucine-zipper. The segment at 407–439 (TQGYLESPKESSEPTGSPAPVIQHSSATAPSNG) is disordered. 2 positions are modified to phosphoserine: S413 and S423. Residues 429–439 (QHSSATAPSNG) are compositionally biased toward polar residues.

Belongs to the bZIP family. Homodimer; binds DNA as homodimer. Heterodimer; heterodimerizes with other members of ATF family and with JUN family members. Interacts with JNK2; the interaction does not phosphorylate ATF7 but acts as a docking site for other ATF-associated partners such as JUN family members. Interacts (via its transactivation domain) with TAF12 (isoforms TAFII15 and TAFII20); the interaction potentiates the transactivation activity (isoform TAFII20 only) and is inhibited by ATF7 sumoylation. Interacts with TAF4; the interaction inhibits the TAF12-dependent transactivation. Interacts with MAPK9; the interaction does not phosphorylate ATF7 but acts as a docking site for ATF7-associated partners such as JUN. Interacts with Ku complex components XRCC6 and XRCC7. Interacts with TERT. As to quaternary structure, (Microbial infection) Interacts with adenovirus 2 E1A; the interaction enhances the ATF7-mediated viral transactivation activity which requires the zinc-binding domains of both E1A and ATF7. In terms of processing, on EGF stimulation, phosphorylated first on Thr-53 allowing subsequent phosphorylation on Thr-51. This latter phosphorylation prevents sumoylation, increases binding to TAF12 and enhances transcriptional activity. Post-translationally, sumoylation delays nuclear localization and inhibits transactivation activity through preventing binding to TAF12. RANBP2 appears to be the specific E3 ligase. On EGF stimulation, phosphorylated first on Thr-53 allowing subsequent phosphorylation on Thr-51. This latter phosphorylation prevents sumoylation, increases binding to TAF12 and enhances transcriptional activity. Social isolation stress as well as TNF-alpha also induce the phosphorylation of ATF7. Phosphorylated in proliferating colonic and small intestinal epithelial cells. As to expression, expressed in various tissues including heart, brain, placenta, lung and skeletal muscle. Highest levels in skeletal muscle. Lowest in lung and placenta. In terms of tissue distribution, strongly expressed in skeletal muscle. Also expressed at lower levels in heart and lung.

The protein resides in the nucleus. It is found in the nucleoplasm. It localises to the chromosome. Its subcellular location is the telomere. The protein localises to the cytoplasm. Its function is as follows. Stress-responsive chromatin regulator that plays a role in various biological processes including innate immunological memory, adipocyte differentiation or telomerase regulation. In absence of stress, contributes to the formation of heterochromatin and heterochromatin-like structure by recruiting histone H3K9 tri- and di-methyltransferases thus silencing the transcription of target genes such as STAT1 in adipocytes, or genes involved in innate immunity in macrophages and adipocytes. Stress induces ATF7 phosphorylation that disrupts interactions with histone methyltransferase and enhances the association with coactivators containing histone acetyltransferase and/or histone demethylase, leading to disruption of the heterochromatin-like structure and subsequently transcriptional activation. In response to TNF-alpha, which is induced by various stresses, phosphorylated ATF7 and telomerase are released from telomeres leading to telomere shortening. Also plays a role in maintaining epithelial regenerative capacity and protecting against cell death during intestinal epithelial damage and repair. Functionally, acts as a dominant repressor of the E-selectin/NF-ELAM1/delta-A promoter. In terms of biological role, acts as a negative regulator, inhibiting both ATF2 and ATF7 transcriptional activities. It may exert these effects by sequestrating in the cytoplasm the Thr-53 phosphorylating kinase, preventing activation. In Homo sapiens (Human), this protein is Cyclic AMP-dependent transcription factor ATF-7 (ATF7).